A 59-amino-acid polypeptide reads, in one-letter code: Ribosome modulation factor (59 aa).

Belongs to the ribosome modulation factor family.

It localises to the cytoplasm. Functionally, during stationary phase, converts 70S ribosomes to an inactive dimeric form (100S ribosomes). The chain is Ribosome modulation factor from Aeromonas veronii (strain B565).